A 32-amino-acid chain; its full sequence is Photosystem I reaction center subunit XII (32 aa).

Residues 9–28 form a helical membrane-spanning segment; it reads VYIALVVALIPGLLAWRLAT.

This sequence belongs to the PsaM family.

It localises to the cellular thylakoid membrane. This Nostoc sp. (strain PCC 7120 / SAG 25.82 / UTEX 2576) protein is Photosystem I reaction center subunit XII.